Consider the following 135-residue polypeptide: Transcription antitermination protein NusB (135 aa).

The protein belongs to the NusB family.

Functionally, involved in transcription antitermination. Required for transcription of ribosomal RNA (rRNA) genes. Binds specifically to the boxA antiterminator sequence of the ribosomal RNA (rrn) operons. This chain is Transcription antitermination protein NusB, found in Shewanella piezotolerans (strain WP3 / JCM 13877).